We begin with the raw amino-acid sequence, 693 residues long: MFYSHTLLARKGPLGTVWCAAHVHQRLKKSQYTSINIPDTVDNIMFPEVPLALRTSSHLLVGVVRIYSKKVDYLYNDWNLLNTWVAKAFVSTQVNLPEDARQAPPESVTLPQALNLDEFDLEDDTLDMEFDNHTRSEEDITLTDQIPTGIDPYVAVTFDEDIISESIPMDVDQSTEPVSRHTGEIDVETAHETGPDNEPRDSNIAFDTGTYSPRNVTEEFTEVQDPRQSNLTEERIPNSERNDATSPGTVPEIERMRDAAHDLSPTSHPSFAAQQQDVRVERTESLDETLNEKEPTIPSIDEEMLNSGRHSAFELRSGSPGSAAGSEEERADFVHPSPQLVLQPSPPPQPQRRARKRKNFDGVTVLTNKNISERLKDPSDTLRKRKKMPSSKLKFWRMNNQSRKDQNFNEPLFTGFSDDLRNVFEKDYVASKPHLAVSDETLPEPASVSPTREAEVEINPVSPIPDSTNPDSTVQLSPAQQTEDVLDSAGPRPAHAESVATEAQSPRTFDNDDMGIEHLRDGGFPVYMPSPPPRSSPFRTDDFTTQSGNWETESYRTEPSTSTVPEDLPGQRNLGLSPVSERTDEELYFLEVGGNSPVGTPASQDSAALTGRARALAQYLKQRSSSSPTTSSHPSGDLSLSEILAGKTRKLAARMFFETLVLKSRGLIDMQQDRPYGDIALKLMPALFSKVQT.

4 disordered regions span residues 167-250 (IPMD…PGTV), 262-361 (DLSP…KNFD), 460-511 (PVSP…TFDN), and 545-573 (TQSGNWETESYRTEPSTSTVPEDLPGQRN). Composition is skewed to basic and acidic residues over residues 178-201 (VSRHTGEIDVETAHETGPDNEPRD) and 232-243 (TEERIPNSERND). Positions 264-277 (SPTSHPSFAAQQQD) are enriched in polar residues. Residues 278-295 (VRVERTESLDETLNEKEP) show a composition bias toward basic and acidic residues. Residues 316–325 (RSGSPGSAAG) show a composition bias toward low complexity. 2 stretches are compositionally biased toward polar residues: residues 465-483 (PDSTNPDSTVQLSPAQQTE) and 545-564 (TQSGNWETESYRTEPSTSTV).

This sequence belongs to the rad21 family. In terms of assembly, component of the cohesin complex. Low expression in shoots, buds, siliques, leaves and roots. Found in, but not limited to, actively dividing cells: in procambium, protoderm and ground meristem in roots, and in shoot and floral meristems.

It is found in the nucleus. May be involved in sister chromatid cohesion during mitosis. In Arabidopsis thaliana (Mouse-ear cress), this protein is Sister chromatid cohesion 1 protein 3 (SYN3).